Here is a 272-residue protein sequence, read N- to C-terminus: Phosphate import ATP-binding protein PstB 1 (272 aa).

In terms of domain architecture, ABC transporter spans 26-267 (ISIENLNLFY…PMKKQTEDYI (242 aa)). Residue 58-65 (GPSGCGKS) participates in ATP binding.

It belongs to the ABC transporter superfamily. Phosphate importer (TC 3.A.1.7) family. The complex is composed of two ATP-binding proteins (PstB), two transmembrane proteins (PstC and PstA) and a solute-binding protein (PstS).

It is found in the cell inner membrane. The catalysed reaction is phosphate(out) + ATP + H2O = ADP + 2 phosphate(in) + H(+). In terms of biological role, part of the ABC transporter complex PstSACB involved in phosphate import. Responsible for energy coupling to the transport system. This chain is Phosphate import ATP-binding protein PstB 1, found in Vibrio parahaemolyticus serotype O3:K6 (strain RIMD 2210633).